Reading from the N-terminus, the 248-residue chain is Myelin protein P0 (248 aa).

An N-terminal signal peptide occupies residues 1–29 (MAPGAPSSSPSPILAALLFSSLVLSPAQA). Residues 30–143 (IVVYTDKEVY…DIVGKTSQVT (114 aa)) form the Ig-like V-type domain. Over 30–153 (IVVYTDKEVY…LYVFEKVPTR (124 aa)) the chain is Extracellular. C50 and C127 are joined by a disulfide. An N-linked (GlcNAc...) (complex) asparagine glycan is attached at N122. The helical transmembrane segment at 154–179 (YGVVLGAVIGGVLGVVLLVLLLFYVV) threads the bilayer. At 180-248 (RYCWLRRQAA…GLGESRKDKK (69 aa)) the chain is on the cytoplasmic side. S210 carries the post-translational modification Phosphoserine; by PKC. The interval 222 to 248 (MLDHSRSTKAASEKKAKGLGESRKDKK) is disordered. Basic and acidic residues predominate over residues 224-248 (DHSRSTKAASEKKAKGLGESRKDKK). Phosphoserine is present on residues S226 and S228. 2 positions are modified to phosphoserine; by PKC: S233 and S243.

Belongs to the myelin P0 protein family. In terms of assembly, homodimer and homotetramer. Post-translationally, N-glycosylated; contains sulfate-substituted glycan.

It is found in the cell membrane. Is an adhesion molecule necessary for normal myelination in the peripheral nervous system. It mediates adhesion between adjacent myelin wraps and ultimately drives myelin compaction. In Equus caballus (Horse), this protein is Myelin protein P0 (MPZ).